Here is a 151-residue protein sequence, read N- to C-terminus: uncharacterized protein (151 aa).

The protein to B.subtilis pcf and to sigma factors.

This is an uncharacterized protein from Bacillus subtilis (strain 168).